Here is a 166-residue protein sequence, read N- to C-terminus: Small ribosomal subunit protein uS9 (166 aa).

Positions 1-16 are enriched in acidic residues; that stretch reads MSDTTNEVEETYEVDE. Residues 1 to 45 are disordered; the sequence is MSDTTNEVEETYEVDEQGIAYSSESAPSADAPLRPATIAPANATG.

Belongs to the universal ribosomal protein uS9 family.

The protein is Small ribosomal subunit protein uS9 of Nocardioides sp. (strain ATCC BAA-499 / JS614).